We begin with the raw amino-acid sequence, 449 residues long: C4-dicarboxylate transport protein (449 aa).

Transmembrane regions (helical) follow at residues 18–38, 61–81, 93–113, 159–179, 202–222, 244–264, 346–366, and 369–389; these read PFYLQLYFWVIIAIILGALLG, MIISPVIFLTIVTGIASVAHV, VYFLFFSTLALLLGLVVAHVV, FVGDNILQVLFVAVLFGIALA, LVQMLMKMAPIGAFGAIAFTI, SLLFVLVILGAVSWLCGFSIL, LFLVAMLSSKGAAGVSGAGFI, and AATLAVVPEVPIAGMALILGV.

It belongs to the dicarboxylate/amino acid:cation symporter (DAACS) (TC 2.A.23) family.

The protein localises to the cell inner membrane. Its function is as follows. Responsible for the transport of dicarboxylates such as succinate, fumarate, and malate from the periplasm across the membrane. This Xylella fastidiosa (strain M23) protein is C4-dicarboxylate transport protein.